The following is a 152-amino-acid chain: UPF0178 protein CKL_3490 (152 aa).

It belongs to the UPF0178 family.

The protein is UPF0178 protein CKL_3490 of Clostridium kluyveri (strain ATCC 8527 / DSM 555 / NBRC 12016 / NCIMB 10680 / K1).